The sequence spans 668 residues: DNA ligase (668 aa).

NAD(+) is bound by residues 37-41, 86-87, and E116; these read DNVYD and SM. Catalysis depends on K118, which acts as the N6-AMP-lysine intermediate. 4 residues coordinate NAD(+): R139, E173, K288, and K312. The Zn(2+) site is built by C406, C409, C424, and C429. A BRCT domain is found at 591–668; the sequence is APDNPFKDKT…TEEEAIAQIE (78 aa).

This sequence belongs to the NAD-dependent DNA ligase family. LigA subfamily. It depends on Mg(2+) as a cofactor. The cofactor is Mn(2+).

The enzyme catalyses NAD(+) + (deoxyribonucleotide)n-3'-hydroxyl + 5'-phospho-(deoxyribonucleotide)m = (deoxyribonucleotide)n+m + AMP + beta-nicotinamide D-nucleotide.. DNA ligase that catalyzes the formation of phosphodiester linkages between 5'-phosphoryl and 3'-hydroxyl groups in double-stranded DNA using NAD as a coenzyme and as the energy source for the reaction. It is essential for DNA replication and repair of damaged DNA. This Lactobacillus helveticus (strain DPC 4571) protein is DNA ligase.